Consider the following 132-residue polypeptide: Small ribosomal subunit protein uS8 (132 aa).

Belongs to the universal ribosomal protein uS8 family. As to quaternary structure, part of the 30S ribosomal subunit. Contacts proteins S5 and S12.

In terms of biological role, one of the primary rRNA binding proteins, it binds directly to 16S rRNA central domain where it helps coordinate assembly of the platform of the 30S subunit. The polypeptide is Small ribosomal subunit protein uS8 (Lactococcus lactis subsp. cremoris (strain MG1363)).